We begin with the raw amino-acid sequence, 438 residues long: MAAQAAPAEELSKLSVEETKPVSAAANGNDSNAESGDEEGEEGTTPAAGAAKKKKKRKPRKKKKAPTSQSEPPRVLVSQLFPNKQYPKGEEVEYVNDNLSRVTNEEKRHLDSLASNQEFLTDYRHAAEVHRQVRQWAQKSIKPGQTLTEIAENIEDSVRALTGHTGLEEGDALVAGMGFPTGLSINHCAAHYTPNAGNKMVLQEDDVMKVDFGVHVNGRIVDSAFTVAFNPRYDPLLEAVKAATNAGIKEAGIDVRVGDIGAAIQEVMESYEVEINGQMLPVKSIRNLNGHTISHYSIHGTKSVPIVKSNDQTKMEEGDVFAIETFGSTGNGYVHEEGEVSHYAKRGDAAKVDLRLSSAKSLLKVIDKNFGTLPFCRRYIDRLGQDKYLLGLNNLVSQGIVEAYPPLVDKKGSYTAQYEHTILLRPTVKEVISRGDDF.

Residues 1-89 (MAAQAAPAEE…LFPNKQYPKG (89 aa)) are disordered. Basic and acidic residues predominate over residues 10–20 (ELSKLSVEETK). Positions 51–65 (AKKKKKRKPRKKKKA) are enriched in basic residues. His-191 is a binding site for substrate. Positions 211, 222, and 291 each coordinate a divalent metal cation. Residue His-299 coordinates substrate. A divalent metal cation contacts are provided by Glu-324 and Glu-419.

This sequence belongs to the peptidase M24A family. Methionine aminopeptidase eukaryotic type 2 subfamily. Co(2+) is required as a cofactor. It depends on Zn(2+) as a cofactor. The cofactor is Mn(2+). Fe(2+) serves as cofactor.

It is found in the cytoplasm. The enzyme catalyses Release of N-terminal amino acids, preferentially methionine, from peptides and arylamides.. In terms of biological role, cotranslationally removes the N-terminal methionine from nascent proteins. The N-terminal methionine is often cleaved when the second residue in the primary sequence is small and uncharged (Met-Ala-, Cys, Gly, Pro, Ser, Thr, or Val). In Sordaria macrospora (strain ATCC MYA-333 / DSM 997 / K(L3346) / K-hell), this protein is Methionine aminopeptidase 2.